We begin with the raw amino-acid sequence, 339 residues long: Phenylalanine--tRNA ligase alpha subunit (339 aa).

A compositionally biased stretch (basic and acidic residues) spans 1-14; sequence MEAKLKQLEEKAKQ. The tract at residues 1-20 is disordered; that stretch reads MEAKLKQLEEKAKQDIQAST. Glu-254 contributes to the Mg(2+) binding site.

It belongs to the class-II aminoacyl-tRNA synthetase family. Phe-tRNA synthetase alpha subunit type 1 subfamily. As to quaternary structure, tetramer of two alpha and two beta subunits. Mg(2+) serves as cofactor.

Its subcellular location is the cytoplasm. It catalyses the reaction tRNA(Phe) + L-phenylalanine + ATP = L-phenylalanyl-tRNA(Phe) + AMP + diphosphate + H(+). This is Phenylalanine--tRNA ligase alpha subunit from Alkaliphilus metalliredigens (strain QYMF).